The following is a 177-amino-acid chain: Large ribosomal subunit protein uL6 (177 aa).

This sequence belongs to the universal ribosomal protein uL6 family. As to quaternary structure, part of the 50S ribosomal subunit.

This protein binds to the 23S rRNA, and is important in its secondary structure. It is located near the subunit interface in the base of the L7/L12 stalk, and near the tRNA binding site of the peptidyltransferase center. The sequence is that of Large ribosomal subunit protein uL6 from Allorhizobium ampelinum (strain ATCC BAA-846 / DSM 112012 / S4) (Agrobacterium vitis (strain S4)).